Reading from the N-terminus, the 63-residue chain is Overexpressed in colon carcinoma 1 protein homolog (63 aa).

Residues 1–10 (MGCGNSTATS) are compositionally biased toward polar residues. Residues 1 to 39 (MGCGNSTATSAAAGRGPTGAVKDTTEDSITEDDKRRNYG) are disordered.

Belongs to the OCC1 family.

This is Overexpressed in colon carcinoma 1 protein homolog from Mus musculus (Mouse).